The following is a 233-amino-acid chain: Large ribosomal subunit protein uL1 (233 aa).

Belongs to the universal ribosomal protein uL1 family. Part of the 50S ribosomal subunit.

Its function is as follows. Binds directly to 23S rRNA. The L1 stalk is quite mobile in the ribosome, and is involved in E site tRNA release. In terms of biological role, protein L1 is also a translational repressor protein, it controls the translation of the L11 operon by binding to its mRNA. The sequence is that of Large ribosomal subunit protein uL1 from Psychrobacter arcticus (strain DSM 17307 / VKM B-2377 / 273-4).